Consider the following 522-residue polypeptide: Ribonuclease Y (522 aa).

Residues 7–27 (STILYCLFFFFLGIAAVLAFI) form a helical membrane-spanning segment. Residues 212–272 (TTSTVGVPTD…VRREVARMSL (61 aa)) form the KH domain. The region spanning 338–431 (VLRHSVEVAF…VATADACSAS (94 aa)) is the HD domain.

The protein belongs to the RNase Y family.

The protein localises to the cell membrane. Its function is as follows. Endoribonuclease that initiates mRNA decay. This chain is Ribonuclease Y, found in Rhodopirellula baltica (strain DSM 10527 / NCIMB 13988 / SH1).